The following is a 295-amino-acid chain: uncharacterized protein (295 aa).

The N-terminal stretch at 1 to 19 (MHKLLLIITVFSTFNVAQA) is a signal peptide.

This is an uncharacterized protein from Rickettsia typhi (strain ATCC VR-144 / Wilmington).